The following is a 455-amino-acid chain: UDP-glycosyltransferase 87A2 (455 aa).

Met-1 bears the N-acetylmethionine mark. UDP-alpha-D-glucose-binding positions include Ser-278, 327–329, 344–352, and 366–369; these read CDQ, HCGFNSTLE, and FWDQ.

It belongs to the UDP-glycosyltransferase family.

This Arabidopsis thaliana (Mouse-ear cress) protein is UDP-glycosyltransferase 87A2 (UGT87A2).